A 272-amino-acid polypeptide reads, in one-letter code: uncharacterized protein (272 aa).

This is an uncharacterized protein from Archaeoglobus fulgidus (strain ATCC 49558 / DSM 4304 / JCM 9628 / NBRC 100126 / VC-16).